The sequence spans 295 residues: Ribosomal RNA small subunit methyltransferase A (295 aa).

Positions 29, 31, 56, 77, 102, and 128 each coordinate S-adenosyl-L-methionine.

Belongs to the class I-like SAM-binding methyltransferase superfamily. rRNA adenine N(6)-methyltransferase family. RsmA subfamily.

The protein resides in the cytoplasm. The catalysed reaction is adenosine(1518)/adenosine(1519) in 16S rRNA + 4 S-adenosyl-L-methionine = N(6)-dimethyladenosine(1518)/N(6)-dimethyladenosine(1519) in 16S rRNA + 4 S-adenosyl-L-homocysteine + 4 H(+). Functionally, specifically dimethylates two adjacent adenosines (A1518 and A1519) in the loop of a conserved hairpin near the 3'-end of 16S rRNA in the 30S particle. May play a critical role in biogenesis of 30S subunits. The chain is Ribosomal RNA small subunit methyltransferase A from Listeria monocytogenes serotype 4a (strain HCC23).